An 885-amino-acid chain; its full sequence is Cytosolic carboxypeptidase-like protein 5 (885 aa).

The region spanning 157–570 (YPFSYSDCQD…AMAIAALDMA (414 aa)) is the Peptidase M14 domain. H252 and E255 together coordinate Zn(2+). The interval 343 to 402 (NSQSPSEHQHSSHLPPDAPLSDPEKADSLQNRAHLGRSSSGDKPEAWTQTEVAEQKPNSV) is disordered. Polar residues predominate over residues 388–402 (AWTQTEVAEQKPNSV). Zn(2+) is bound at residue H434. The active-site Proton donor/acceptor is E516. Disordered regions lie at residues 605–733 (TTVN…LASS) and 783–839 (RLQA…PRPC). A compositionally biased stretch (polar residues) spans 620–640 (PPRSNNGLPVSCSENTLSRAR). 2 stretches are compositionally biased toward low complexity: residues 641 to 666 (SFSTGTSAGGSSSSQQNSPQMKNSPS) and 714 to 733 (PTSSSLAPSPTPASSNLASS). Position 840 is a phosphoserine (S840).

The protein belongs to the peptidase M14 family. Zn(2+) is required as a cofactor.

It is found in the cytoplasm. The protein localises to the cytosol. Its subcellular location is the nucleus. The protein resides in the cytoskeleton. It localises to the spindle. It is found in the midbody. The enzyme catalyses gamma-L-glutamyl-L-glutamyl-[protein] + H2O = L-glutamyl-[protein] + L-glutamate. It catalyses the reaction (L-glutamyl)(n+1)-gamma-L-glutamyl-L-glutamyl-[protein] + H2O = (L-glutamyl)(n)-gamma-L-glutamyl-L-glutamyl-[protein] + L-glutamate. The catalysed reaction is C-terminal L-alpha-aminoacyl-L-glutamyl-[tubulin] + H2O = C-terminal L-alpha-aminoacyl-[tubulin] + L-glutamate. It carries out the reaction C-terminal L-alpha-aminoacyl-L-glutamyl-L-glutamyl-[tubulin] + H2O = C-terminal L-alpha-aminoacyl-L-glutamyl-[tubulin] + L-glutamate. Its function is as follows. Metallocarboxypeptidase that mediates deglutamylation of tubulin and non-tubulin target proteins. Catalyzes the removal of polyglutamate side chains present on the gamma-carboxyl group of glutamate residues within the C-terminal tail of alpha- and beta-tubulin. Cleaves alpha- and gamma-linked polyglutamate tubulin side-chain, as well as the branching point glutamate. Also catalyzes the removal of alpha-linked glutamate residues from the carboxy-terminus of alpha-tubulin. Mediates deglutamylation of nucleotidyltransferase CGAS, leading to CGAS antiviral defense response activation. The chain is Cytosolic carboxypeptidase-like protein 5 (AGBL5) from Bos taurus (Bovine).